The following is a 302-amino-acid chain: MSQLLQDYLNWENYILRRVDFPTSYVVEGEVVRIEAMPRLYISGMGGSGVVADLIRDFSLTWNWEVEVIAVKDYFLKARDGLLIAVSYSGNTIETLYTVEYAKRRRIPAVAITTGGRLAQMGVPTVIVPKASAPRAALPQLLTAALHVVAKVYGIDVKIPEGLEPPNEALIHKLVEEFQKRPTIIAAESMRGVAYRVKNEFNENAKIEPSVEILPEAHHNWIEGSERAVVALTSPHIPKEHQERVKATVEIVGGSIYAVEMHPKGVLSFLRDVGIASVKLAEIRGVNPLATPRIDALKRRLQ.

Residues 27–160 (VEGEVVRIEA…KVYGIDVKIP (134 aa)) form the SIS domain. D-fructose 6-phosphate is bound by residues G47, S48, S87, S89, T92, and R135. D-glucose 6-phosphate-binding residues include G47, S48, S87, S89, T92, and R135. E203 acts as the Proton acceptor in catalysis. D-fructose 6-phosphate is bound by residues H219 and K298. Residues H219 and K298 each contribute to the D-glucose 6-phosphate site. The Proton donor role is filled by H219. K298 acts as the Proton acceptor in catalysis.

This sequence belongs to the PGI/PMI family. As to quaternary structure, homodimer.

The protein localises to the cytoplasm. The catalysed reaction is alpha-D-glucose 6-phosphate = beta-D-fructose 6-phosphate. It catalyses the reaction D-mannose 6-phosphate = D-fructose 6-phosphate. Its activity is regulated as follows. Inhibited by 5-phosphoarabinonate (PAB) and 6-phosphogluconate. In terms of biological role, dual specificity isomerase that catalyzes the isomerization of both glucose-6-phosphate and mannose-6-phosphate to fructose-6-phosphate with similar catalytic efficiency. This chain is Bifunctional phosphoglucose/phosphomannose isomerase, found in Pyrobaculum aerophilum (strain ATCC 51768 / DSM 7523 / JCM 9630 / CIP 104966 / NBRC 100827 / IM2).